The sequence spans 398 residues: uncharacterized protein (398 aa).

The 233-residue stretch at 21-253 (TNFGPTNLII…WQLTSTSEPE (233 aa)) folds into the Radical SAM core domain. [4Fe-4S] cluster contacts are provided by Cys-37, Cys-41, and Cys-44.

This sequence belongs to the radical SAM superfamily. Anaerobic sulfatase-maturating enzyme family. Requires [4Fe-4S] cluster as cofactor.

This is an uncharacterized protein from Synechocystis sp. (strain ATCC 27184 / PCC 6803 / Kazusa).